Here is a 386-residue protein sequence, read N- to C-terminus: F420 non-reducing hydrogenase II small subunit (386 aa).

Positions 1–51 (MVEMSTGMKNLTRTLESMDFLKMDRRTFMKAVSALGATAFLGTYQTEIVNA) form a signal peptide, tat-type signal. The [4Fe-4S] cluster site is built by Cys-67, Cys-70, Cys-178, Cys-227, His-273, Cys-276, Cys-296, and Cys-302. Positions 311, 330, and 333 each coordinate [3Fe-4S] cluster.

It belongs to the [NiFe]/[NiFeSe] hydrogenase small subunit family. Composed of a large subunit (VhtA), a small subunit (VhtG) and a cytochrome subunit (VhtC). [4Fe-4S] cluster serves as cofactor. [3Fe-4S] cluster is required as a cofactor. Post-translationally, predicted to be exported by the Tat system. The position of the signal peptide cleavage has not been experimentally proven.

The protein localises to the cell membrane. It carries out the reaction methanophenazine + H2 = dihydromethanophenazine. Functionally, part of the F420 non-reducing hydrogenase II complex that catalyzes the reduction of methanophenazine to dihydromethanophenazine. The chain is F420 non-reducing hydrogenase II small subunit from Methanosarcina mazei (strain ATCC BAA-159 / DSM 3647 / Goe1 / Go1 / JCM 11833 / OCM 88) (Methanosarcina frisia).